Here is a 347-residue protein sequence, read N- to C-terminus: uncharacterized protein (347 aa).

Over 1–44 (MWNPKKKSEALAKFKSFPYPKPGTSNVLDSKEGDTRRKYFTKTH) the chain is Cytoplasmic. The chain crosses the membrane as a helical; Signal-anchor for type II membrane protein span at residues 45 to 62 (LHRLFVFVVLLLCSGYFL). Topologically, residues 63-347 (KHTLLTRPKE…RGWRKLVPFL (285 aa)) are lumenal.

Belongs to the glycosyltransferase 34 family.

The protein localises to the endoplasmic reticulum membrane. This is an uncharacterized protein from Schizosaccharomyces pombe (strain 972 / ATCC 24843) (Fission yeast).